The sequence spans 792 residues: DNA mismatch repair protein MSH4 (792 aa).

553–560 (GPNMSGKS) is a binding site for ATP.

It belongs to the DNA mismatch repair MutS family. As to expression, specifically expressed in flowers.

It localises to the nucleus. Its function is as follows. Involved in meiotic recombination in association with MSH5. Required for reciprocal recombination and proper segregation of homologous chromosomes at meiosis. Promotes homologous recombination through facilitating chiasma formation during prophase I. Involved in the control of class I crossovers formation. This Arabidopsis thaliana (Mouse-ear cress) protein is DNA mismatch repair protein MSH4 (MSH4).